Reading from the N-terminus, the 500-residue chain is Cryptochrome DASH (500 aa).

In terms of domain architecture, Photolyase/cryptochrome alpha/beta spans 4 to 138 (KTVLVWYRND…PVRSFWGTTL (135 aa)).

Belongs to the DNA photolyase class-1 family. Requires FAD as cofactor. It depends on (6R)-5,10-methylene-5,6,7,8-tetrahydrofolate as a cofactor.

In terms of biological role, may have a photoreceptor function. Binds DNA; probably functions as a transcriptional repressor. The protein is Cryptochrome DASH (cry) of Gloeobacter violaceus (strain ATCC 29082 / PCC 7421).